A 227-amino-acid chain; its full sequence is MSESLIAIVPAAGIGARASLPGEAAVPKQYRPLAGQPMLRHAVRALLADPRIVQVRVAVSAGDGWVEQALAGLPRTVWRPCGGPNRVDTVAAALADSGADADDWILVHDAARPGLPAAALARLIDACLDDAVGGLLALPVADTVKAGRQRVSRTVDRDGLWLAQTPQMFRAGLLRDALARARAAGLAVTDEASAVEAAGHAPRLVAGALRNFKVTWPDDFELMEKWL.

This sequence belongs to the IspD/TarI cytidylyltransferase family. IspD subfamily.

The enzyme catalyses 2-C-methyl-D-erythritol 4-phosphate + CTP + H(+) = 4-CDP-2-C-methyl-D-erythritol + diphosphate. Its pathway is isoprenoid biosynthesis; isopentenyl diphosphate biosynthesis via DXP pathway; isopentenyl diphosphate from 1-deoxy-D-xylulose 5-phosphate: step 2/6. Catalyzes the formation of 4-diphosphocytidyl-2-C-methyl-D-erythritol from CTP and 2-C-methyl-D-erythritol 4-phosphate (MEP). In Bordetella parapertussis (strain 12822 / ATCC BAA-587 / NCTC 13253), this protein is 2-C-methyl-D-erythritol 4-phosphate cytidylyltransferase.